A 437-amino-acid polypeptide reads, in one-letter code: Eukaryotic peptide chain release factor subunit 1 (437 aa).

The residue at position 2 (Ala2) is an N-acetylalanine. The short motif at 61–64 (NIKS) is the NIKS motif; plays an important role in translational termination element. Lys63 carries the post-translational modification 4-hydroxylysine. Residue Lys87 forms a Glycyl lysine isopeptide (Lys-Gly) (interchain with G-Cter in SUMO2) linkage. Gln185 is subject to N5-methylglutamine. Residue Thr347 is modified to Phosphothreonine. Residue Lys404 forms a Glycyl lysine isopeptide (Lys-Gly) (interchain with G-Cter in SUMO2) linkage.

This sequence belongs to the eukaryotic release factor 1 family. In terms of assembly, component of the eRF1-eRF3-GTP ternary complex, composed of ETF1/ERF1 and eRF3 (GSPT1/ERF3A or GSPT2/ERF3B) and GTP. Component of the transient SURF (SMG1-UPF1-eRF1-eRF3) complex. Interacts with JMJD4. The ETF1-GSPT1 complex interacts with JMJD4. Post-translationally, hydroxylation at Lys-63 by JMJD4 promotes its translational termination efficiency. In terms of processing, methylated at Gln-185 by N6AMT1. Ubiquitinated via 'Lys-6'-linked polyubiquitin chains by RNF14 and RNF25 in response to ribosome collisions (ribosome stalling), leading to its degradation by the proteasome and rescue of stalled ribosomes.

The protein localises to the cytoplasm. Component of the eRF1-eRF3-GTP ternary complex, a ternary complex that mediates translation termination in response to the termination codons. The eRF1-eRF3-GTP complex binds to a stop codon in the ribosomal A-site. ETF1/ERF1 is responsible for stop codon recognition and inducing hydrolysis of peptidyl-tRNA. Following GTP hydrolysis, eRF3 (GSPT1/ERF3A or GSPT2/ERF3B) dissociates, permitting ETF1/eRF1 to accommodate fully in the A-site, followed by hydrolysis of peptidyl-tRNA. Component of the transient SURF complex which recruits UPF1 to stalled ribosomes in the context of nonsense-mediated decay (NMD) of mRNAs containing premature stop codons. Required for SHFL-mediated translation termination which inhibits programmed ribosomal frameshifting (-1PRF) of mRNA from viruses and cellular genes. The sequence is that of Eukaryotic peptide chain release factor subunit 1 (ETF1) from Pongo abelii (Sumatran orangutan).